A 432-amino-acid chain; its full sequence is D-amino acid dehydrogenase (432 aa).

3-17 is a binding site for FAD; the sequence is VVILGSGVVGVTSAW.

This sequence belongs to the DadA oxidoreductase family. FAD is required as a cofactor.

The catalysed reaction is a D-alpha-amino acid + A + H2O = a 2-oxocarboxylate + AH2 + NH4(+). It functions in the pathway amino-acid degradation; D-alanine degradation; NH(3) and pyruvate from D-alanine: step 1/1. In terms of biological role, oxidative deamination of D-amino acids. This is D-amino acid dehydrogenase from Salmonella dublin (strain CT_02021853).